We begin with the raw amino-acid sequence, 372 residues long: L-selectin (372 aa).

The first 28 residues, 1 to 28, serve as a signal peptide directing secretion; it reads MVFPWRCQSAQRGSWSFLKLWIRTLLCC. Residues 29–38 constitute a propeptide that is removed on maturation; it reads DLLPHHGTHC. Topologically, residues 39–332 are extracellular; that stretch reads WTYHYSERSM…FSKIKEGDYN (294 aa). The C-type lectin domain occupies 55 to 155; it reads KFCKHNYTDL…ACHKRKAALC (101 aa). 10 disulfides stabilise this stretch: C57-C155, C128-C147, C128-C160, C160-C171, C165-C180, C182-C191, C197-C241, C227-C254, C259-C303, and C289-C316. Residues N60 and N104 are each glycosylated (N-linked (GlcNAc...) asparagine). E118, N120, E126, N143, and D144 together coordinate Ca(2+). An EGF-like domain is found at 156–192; that stretch reads YTASCQPESCNRHGECVETINNNTCICDPGYYGPQCQ. N-linked (GlcNAc...) asparagine glycosylation occurs at N177. 2 consecutive Sushi domains span residues 195 to 256 and 257 to 318; these read IQCE…ICQV and IQCM…ICQK. N-linked (GlcNAc...) asparagine glycosylation is found at N226, N246, and N278. A helical membrane pass occupies residues 333-355; that stretch reads PLFIPVAVMVTAFSGLAFIIWLA. Over 356 to 372 the chain is Cytoplasmic; it reads RRLKKGKKSQERMDDPY.

This sequence belongs to the selectin/LECAM family. In terms of assembly, interaction with SELPLG/PSGL1 and PODXL2 is required for promoting recruitment and rolling of leukocytes. This interaction is dependent on the sialyl Lewis X glycan modification of SELPLG and PODXL2, and tyrosine sulfation modifications of SELPLG. Sulfation on 'Tyr-51' of SELPLG is important for L-selectin binding. In terms of processing, N-glycosylated. As to expression, expressed in peripheral blood mononuclear cells (PBMC), spleen and thymus.

Its subcellular location is the cell membrane. Functionally, calcium-dependent lectin that mediates cell adhesion by binding to glycoproteins on neighboring cells. Mediates the adherence of lymphocytes to endothelial cells of high endothelial venules in peripheral lymph nodes. Promotes initial tethering and rolling of leukocytes in endothelia. This Rattus norvegicus (Rat) protein is L-selectin (Sell).